We begin with the raw amino-acid sequence, 122 residues long: Selenoprotein H (122 aa).

Lysine 20 bears the N6-acetyllysine mark. The cysteinyl-selenocysteine (Cys-Sec); redox-active cross-link spans 41–44 (CTSU). Residue selenocysteine 44 is a non-standard amino acid, selenocysteine.

Belongs to the SelWTH family.

Its function is as follows. May be involved in a redox-related process. The sequence is that of Selenoprotein H from Homo sapiens (Human).